Here is a 206-residue protein sequence, read N- to C-terminus: uncharacterized protein (206 aa).

The disordered stretch occupies residues 128-206 (KRYNVQKPKV…DQSWLDELLR (79 aa)). The span at 171–181 (YISSNHSSMHI) shows a compositional bias: polar residues.

The protein resides in the cytoplasm. It localises to the nucleus. This is an uncharacterized protein from Schizosaccharomyces pombe (strain 972 / ATCC 24843) (Fission yeast).